A 126-amino-acid chain; its full sequence is Aspartate 1-decarboxylase 2 (126 aa).

The Schiff-base intermediate with substrate; via pyruvic acid role is filled by Ser25. The residue at position 25 (Ser25) is a Pyruvic acid (Ser). A substrate-binding site is contributed by Thr57. The Proton donor role is filled by Tyr58. 73–75 (GSA) contributes to the substrate binding site.

Belongs to the PanD family. Heterooctamer of four alpha and four beta subunits. Pyruvate serves as cofactor. Post-translationally, is synthesized initially as an inactive proenzyme, which is activated by self-cleavage at a specific serine bond to produce a beta-subunit with a hydroxyl group at its C-terminus and an alpha-subunit with a pyruvoyl group at its N-terminus.

Its subcellular location is the cytoplasm. The catalysed reaction is L-aspartate + H(+) = beta-alanine + CO2. It participates in cofactor biosynthesis; (R)-pantothenate biosynthesis; beta-alanine from L-aspartate: step 1/1. Catalyzes the pyruvoyl-dependent decarboxylation of aspartate to produce beta-alanine. This chain is Aspartate 1-decarboxylase 2, found in Polaromonas sp. (strain JS666 / ATCC BAA-500).